The primary structure comprises 584 residues: Kelch domain-containing protein 4 (584 aa).

Residues 1-10 show a composition bias toward basic residues; the sequence is MGKKGKKEKK. 2 disordered regions span residues 1–33 and 50–69; these read MGKK…RKEE and KTQV…NASL. The segment covering 11–24 has biased composition (basic and acidic residues); sequence GRGAEKTAAKMEKK. 5 Kelch repeats span residues 77–129, 133–187, 188–238, 243–289, and 308–361; these read ELIL…VVPQ, QLWV…AWKR, QLIL…LMAV, SIAI…INPS, and QILV…RRGK. Disordered stretches follow at residues 348–381, 405–433, and 482–533; these read KGPK…APEP, SGLG…CPRS, and PKSQ…EQFE. The residue at position 418 (Ser-418) is a Phosphoserine. The Kelch 6 repeat unit spans residues 443–494; sequence LLYVYGGMFEAGDRQVTLSDLYCLDLHKMEEWKTLVEMDPKSQEWLEESDSE. Residues 487–519 show a composition bias toward acidic residues; sequence WLEESDSEEDSSSDEESEDGEDKDQEDSAEEGA. Positions 520-533 are enriched in basic and acidic residues; it reads DPQHPEVARGEQFE.

The sequence is that of Kelch domain-containing protein 4 (Klhdc4) from Mus musculus (Mouse).